The sequence spans 339 residues: Phosphate acyltransferase (339 aa).

The protein belongs to the PlsX family. As to quaternary structure, homodimer. Probably interacts with PlsY.

It is found in the cytoplasm. It catalyses the reaction a fatty acyl-[ACP] + phosphate = an acyl phosphate + holo-[ACP]. Its pathway is lipid metabolism; phospholipid metabolism. Catalyzes the reversible formation of acyl-phosphate (acyl-PO(4)) from acyl-[acyl-carrier-protein] (acyl-ACP). This enzyme utilizes acyl-ACP as fatty acyl donor, but not acyl-CoA. The sequence is that of Phosphate acyltransferase from Clostridium perfringens (strain ATCC 13124 / DSM 756 / JCM 1290 / NCIMB 6125 / NCTC 8237 / Type A).